The primary structure comprises 233 residues: Large ribosomal subunit protein bL25 (233 aa).

Positions 1-23 (MATVRELKATARPKSGKGAARAE) are disordered.

Belongs to the bacterial ribosomal protein bL25 family. CTC subfamily. Part of the 50S ribosomal subunit; part of the 5S rRNA/L5/L18/L25 subcomplex. Contacts the 5S rRNA. Binds to the 5S rRNA independently of L5 and L18.

Functionally, this is one of the proteins that binds to the 5S RNA in the ribosome where it forms part of the central protuberance. The sequence is that of Large ribosomal subunit protein bL25 from Nitrobacter hamburgensis (strain DSM 10229 / NCIMB 13809 / X14).